The sequence spans 216 residues: Pyrrolidone-carboxylate peptidase (216 aa).

Residues Glu80, Cys143, and His168 contribute to the active site.

This sequence belongs to the peptidase C15 family. As to quaternary structure, homotetramer.

Its subcellular location is the cytoplasm. It catalyses the reaction Release of an N-terminal pyroglutamyl group from a polypeptide, the second amino acid generally not being Pro.. In terms of biological role, removes 5-oxoproline from various penultimate amino acid residues except L-proline. The protein is Pyrrolidone-carboxylate peptidase of Cupriavidus pinatubonensis (strain JMP 134 / LMG 1197) (Cupriavidus necator (strain JMP 134)).